Consider the following 571-residue polypeptide: MRTSQFLLATQKETPSDAVVISHQLMLRAGMIRKLASGLYTWLPMGLRVMRKVEAIVREEMDAAGSLEVLMPSTQPAELWQESGRWEEYGPELLRIKDRHGRDFCAGPTHEEVITDLMRNELSSYKQLPINLYQIQTKFRDEIRPRFGLMRGREFIMKDSYSFHADQASLQVTYDRMHDAYCNIFTRLGLKFRPVEADNGSIGGAGSHEFHVLAESGEDDIVFSNGSDYAANIEKAEAVPRETSRAAPSEELRLVDTPDTKTIAALVEKFNLPIEKTIKTLIVHAEEEGKLIALIIRGDHELNEIKAANQPGVASPLVMASDAELRDAIGAGAGSLGPLNLPLPIIIDRSVELMSDFAIGANIDDKHYFGVNWERDLPVPTVADLRNVVAGDPSPDGKGTLEIKRGIEVGHIFQLGNKYSKAMKCEVLGENGKPVTLEMGCYGIGVSRVVAAAIEQNNDENGIIWSDALAPFQIALVPLRYETELVREATDKLYAELTAAGFEVLLDDRDKKTSPGIKFADMELIGIPHRIVVSDRGLAEGNLEYKSRTEGQAQALPVADVLSFLQARIRR.

It belongs to the class-II aminoacyl-tRNA synthetase family. ProS type 1 subfamily. In terms of assembly, homodimer.

The protein localises to the cytoplasm. The enzyme catalyses tRNA(Pro) + L-proline + ATP = L-prolyl-tRNA(Pro) + AMP + diphosphate. Its function is as follows. Catalyzes the attachment of proline to tRNA(Pro) in a two-step reaction: proline is first activated by ATP to form Pro-AMP and then transferred to the acceptor end of tRNA(Pro). As ProRS can inadvertently accommodate and process non-cognate amino acids such as alanine and cysteine, to avoid such errors it has two additional distinct editing activities against alanine. One activity is designated as 'pretransfer' editing and involves the tRNA(Pro)-independent hydrolysis of activated Ala-AMP. The other activity is designated 'posttransfer' editing and involves deacylation of mischarged Ala-tRNA(Pro). The misacylated Cys-tRNA(Pro) is not edited by ProRS. The protein is Proline--tRNA ligase of Pseudomonas fluorescens (strain Pf0-1).